A 327-amino-acid polypeptide reads, in one-letter code: MLKKIGILTSGGDSQGMNAAIAGVIKTAHAKGLETYIIRDGYLGLINNWIEVVDNNFADSIMLLGGTVIGSARLPEFKDPEVQKKAVDILKKQEIAALVVIGGDGSYQGAQRLTELGINCIALPGTIDNDITSSDYTIGFDTAINIVVEAIDRLRDTMQSHNRCSIVEVMGHACGDIALYAGIAGGADIISINEAALSETEIADRVAMLHQAQKRSVIVVVSEMIYPDVHKLAKLVESKSGYITRATVLGHTQRGGNPTAMDRYRAFQMAQFAVEQIIAGVGGLAIGNQGDQIIARPIMEALSIPRSSRKEIWAKFDQLNQNIYQKS.

Residues G12, 73–74 (RL), and 103–106 (GDGS) each bind ATP. D104 is a binding site for Mg(2+). 126–128 (TID) serves as a coordination point for substrate. D128 functions as the Proton acceptor in the catalytic mechanism. R155 contributes to the ADP binding site. Substrate-binding positions include R163 and 170-172 (MGH). Residues 186 to 188 (GAD) and 214 to 216 (KRS) contribute to the ADP site. Substrate is bound by residues E223, R245, and 251–254 (HTQR).

Belongs to the phosphofructokinase type A (PFKA) family. ATP-dependent PFK group I subfamily. Prokaryotic clade 'B1' sub-subfamily. In terms of assembly, homotetramer. Mg(2+) serves as cofactor.

The protein localises to the cytoplasm. It catalyses the reaction beta-D-fructose 6-phosphate + ATP = beta-D-fructose 1,6-bisphosphate + ADP + H(+). Its pathway is carbohydrate degradation; glycolysis; D-glyceraldehyde 3-phosphate and glycerone phosphate from D-glucose: step 3/4. With respect to regulation, allosterically activated by ADP and other diphosphonucleosides, and allosterically inhibited by phosphoenolpyruvate. Its function is as follows. Catalyzes the phosphorylation of D-fructose 6-phosphate to fructose 1,6-bisphosphate by ATP, the first committing step of glycolysis. The chain is ATP-dependent 6-phosphofructokinase from Spiroplasma citri.